The sequence spans 132 residues: Small ribosomal subunit protein bS6 (132 aa).

The interval 96–132 is disordered; that stretch reads HAEGPSIQMQKRDERERGDRGDRPDRGDRGERGGFRR. Over residues 105-132 the composition is skewed to basic and acidic residues; it reads QKRDERERGDRGDRPDRGDRGERGGFRR.

The protein belongs to the bacterial ribosomal protein bS6 family.

In terms of biological role, binds together with bS18 to 16S ribosomal RNA. This is Small ribosomal subunit protein bS6 from Cereibacter sphaeroides (strain ATCC 17025 / ATH 2.4.3) (Rhodobacter sphaeroides).